Reading from the N-terminus, the 539-residue chain is Chaperonin GroEL 1 (539 aa).

ATP is bound by residues 30 to 33 (TLGP), Lys-51, 87 to 91 (DGTTT), Gly-415, 480 to 482 (NAA), and Asp-496.

Belongs to the chaperonin (HSP60) family. As to quaternary structure, forms a cylinder of 14 subunits composed of two heptameric rings stacked back-to-back. Interacts with the co-chaperonin GroES.

It is found in the cytoplasm. It catalyses the reaction ATP + H2O + a folded polypeptide = ADP + phosphate + an unfolded polypeptide.. In terms of biological role, together with its co-chaperonin GroES, plays an essential role in assisting protein folding. The GroEL-GroES system forms a nano-cage that allows encapsulation of the non-native substrate proteins and provides a physical environment optimized to promote and accelerate protein folding. In Erythrobacter litoralis (strain HTCC2594), this protein is Chaperonin GroEL 1.